The following is a 110-amino-acid chain: UPF0060 membrane protein Haur_1798 (110 aa).

4 helical membrane-spanning segments follow: residues valine 7–tryptophan 27, serine 33–leucine 53, valine 63–aspartate 83, and glutamine 89–proline 109.

It belongs to the UPF0060 family.

The protein localises to the cell membrane. In Herpetosiphon aurantiacus (strain ATCC 23779 / DSM 785 / 114-95), this protein is UPF0060 membrane protein Haur_1798.